A 139-amino-acid chain; its full sequence is Transcription antitermination protein NusB (139 aa).

It belongs to the NusB family.

Functionally, involved in transcription antitermination. Required for transcription of ribosomal RNA (rRNA) genes. Binds specifically to the boxA antiterminator sequence of the ribosomal RNA (rrn) operons. This is Transcription antitermination protein NusB from Limosilactobacillus fermentum (strain NBRC 3956 / LMG 18251) (Lactobacillus fermentum).